Here is a 218-residue protein sequence, read N- to C-terminus: Large ribosomal subunit protein uL3 (218 aa).

Belongs to the universal ribosomal protein uL3 family. In terms of assembly, part of the 50S ribosomal subunit. Forms a cluster with proteins L14 and L19.

In terms of biological role, one of the primary rRNA binding proteins, it binds directly near the 3'-end of the 23S rRNA, where it nucleates assembly of the 50S subunit. The sequence is that of Large ribosomal subunit protein uL3 from Corynebacterium aurimucosum (strain ATCC 700975 / DSM 44827 / CIP 107346 / CN-1) (Corynebacterium nigricans).